The sequence spans 425 residues: Serine--tRNA ligase (425 aa).

231–233 (TAE) is a binding site for L-serine. 262–264 (RSE) is an ATP binding site. Glu-285 lines the L-serine pocket. 349 to 352 (EISS) contributes to the ATP binding site. Ser-385 serves as a coordination point for L-serine.

The protein belongs to the class-II aminoacyl-tRNA synthetase family. Type-1 seryl-tRNA synthetase subfamily. As to quaternary structure, homodimer. The tRNA molecule binds across the dimer.

The protein resides in the cytoplasm. It carries out the reaction tRNA(Ser) + L-serine + ATP = L-seryl-tRNA(Ser) + AMP + diphosphate + H(+). It catalyses the reaction tRNA(Sec) + L-serine + ATP = L-seryl-tRNA(Sec) + AMP + diphosphate + H(+). It functions in the pathway aminoacyl-tRNA biosynthesis; selenocysteinyl-tRNA(Sec) biosynthesis; L-seryl-tRNA(Sec) from L-serine and tRNA(Sec): step 1/1. Its function is as follows. Catalyzes the attachment of serine to tRNA(Ser). Is also able to aminoacylate tRNA(Sec) with serine, to form the misacylated tRNA L-seryl-tRNA(Sec), which will be further converted into selenocysteinyl-tRNA(Sec). This chain is Serine--tRNA ligase, found in Bartonella henselae (strain ATCC 49882 / DSM 28221 / CCUG 30454 / Houston 1) (Rochalimaea henselae).